We begin with the raw amino-acid sequence, 215 residues long: Adenylate kinase (215 aa).

10 to 15 (GAGKGT) contacts ATP. The interval 30-59 (STGDMLRAAVKAGSPLGQQVKGVMDSGGLV) is NMP. AMP contacts are provided by residues Thr-31, Arg-36, 57-59 (GLV), 85-88 (GFPR), and Gln-92. An LID region spans residues 122–159 (GRRVHPASGRVYHTEHNPPKVAGKDDVTGEDLIQREDD). ATP is bound by residues Arg-123 and 132-133 (VY). AMP-binding residues include Arg-156 and Arg-167. Residue Gly-201 participates in ATP binding.

Belongs to the adenylate kinase family. As to quaternary structure, monomer.

The protein localises to the cytoplasm. It catalyses the reaction AMP + ATP = 2 ADP. It participates in purine metabolism; AMP biosynthesis via salvage pathway; AMP from ADP: step 1/1. Functionally, catalyzes the reversible transfer of the terminal phosphate group between ATP and AMP. Plays an important role in cellular energy homeostasis and in adenine nucleotide metabolism. This Pseudomonas paraeruginosa (strain DSM 24068 / PA7) (Pseudomonas aeruginosa (strain PA7)) protein is Adenylate kinase.